The following is a 366-amino-acid chain: tRNA/tmRNA (uracil-C(5))-methyltransferase (366 aa).

Gln190, Tyr218, Asn223, Glu239, and Asp299 together coordinate S-adenosyl-L-methionine. The active-site Nucleophile is Cys324. Glu358 functions as the Proton acceptor in the catalytic mechanism.

The protein belongs to the class I-like SAM-binding methyltransferase superfamily. RNA M5U methyltransferase family. TrmA subfamily.

It carries out the reaction uridine(54) in tRNA + S-adenosyl-L-methionine = 5-methyluridine(54) in tRNA + S-adenosyl-L-homocysteine + H(+). The catalysed reaction is uridine(341) in tmRNA + S-adenosyl-L-methionine = 5-methyluridine(341) in tmRNA + S-adenosyl-L-homocysteine + H(+). Its function is as follows. Dual-specificity methyltransferase that catalyzes the formation of 5-methyluridine at position 54 (m5U54) in all tRNAs, and that of position 341 (m5U341) in tmRNA (transfer-mRNA). In Shigella dysenteriae serotype 1 (strain Sd197), this protein is tRNA/tmRNA (uracil-C(5))-methyltransferase.